The primary structure comprises 382 residues: Mannitol-1-phosphate 5-dehydrogenase (382 aa).

3-14 (ALHFGAGNIGRG) is an NAD(+) binding site. Lys269 carries the post-translational modification N6-acetyllysine.

It belongs to the mannitol dehydrogenase family.

The enzyme catalyses D-mannitol 1-phosphate + NAD(+) = beta-D-fructose 6-phosphate + NADH + H(+). The polypeptide is Mannitol-1-phosphate 5-dehydrogenase (Escherichia coli O139:H28 (strain E24377A / ETEC)).